The following is a 183-amino-acid chain: Large ribosomal subunit protein eL18 (183 aa).

The interval 150–183 (RHFGPAPGAPRSHTKPYVRTKGHERARPRRRSNV) is disordered. The segment covering 161–183 (SHTKPYVRTKGHERARPRRRSNV) has biased composition (basic residues).

It belongs to the eukaryotic ribosomal protein eL18 family.

Its subcellular location is the cytoplasm. This Spodoptera frugiperda (Fall armyworm) protein is Large ribosomal subunit protein eL18 (RpL18).